Here is a 547-residue protein sequence, read N- to C-terminus: Undecaprenyl phosphate-alpha-4-amino-4-deoxy-L-arabinose arabinosyl transferase (547 aa).

Helical transmembrane passes span 1–21, 83–103, 111–131, 174–194, 205–225, 253–273, 286–306, 311–331, 346–366, 378–398, and 408–428; these read MKLTKWALPLFFLLFYLLPLD, FASAAATGLSALLIVWFALQL, FLAGLIYLSLLIVYGIGTYSV, FLTKGFIALAVPVIVIVPYVI, FGPLAMVSAALLAAPWAIAVH, APFWYYLPMGLLGTLPWLGLL, ISPETLYLLAWVVLPLLFFSV, LLTYILPCFAPLAMLLAASAV, AWLNGLFGLICLAVLAVLALS, GALAVAMVIFAGWALLGFIQL, and SALCPMVLAVGLPWALPQSLI.

Belongs to the glycosyltransferase 83 family.

It localises to the cell inner membrane. It carries out the reaction 4-amino-4-deoxy-alpha-L-arabinopyranosyl di-trans,octa-cis-undecaprenyl phosphate + lipid IVA = lipid IIA + di-trans,octa-cis-undecaprenyl phosphate.. The protein operates within lipopolysaccharide metabolism; 4-amino-4-deoxy-beta-L-arabinose-lipid A biosynthesis. Catalyzes the transfer of the L-Ara4N moiety of the glycolipid undecaprenyl phosphate-alpha-L-Ara4N to lipid A. The modified arabinose is attached to lipid A and is required for resistance to polymyxin and cationic antimicrobial peptides. In Aeromonas salmonicida (strain A449), this protein is Undecaprenyl phosphate-alpha-4-amino-4-deoxy-L-arabinose arabinosyl transferase.